We begin with the raw amino-acid sequence, 406 residues long: 4-hydroxy-3-methylbut-2-en-1-yl diphosphate synthase (flavodoxin) (406 aa).

Residues Cys-297, Cys-300, Cys-343, and Glu-350 each coordinate [4Fe-4S] cluster.

This sequence belongs to the IspG family. [4Fe-4S] cluster is required as a cofactor.

It catalyses the reaction (2E)-4-hydroxy-3-methylbut-2-enyl diphosphate + oxidized [flavodoxin] + H2O + 2 H(+) = 2-C-methyl-D-erythritol 2,4-cyclic diphosphate + reduced [flavodoxin]. It functions in the pathway isoprenoid biosynthesis; isopentenyl diphosphate biosynthesis via DXP pathway; isopentenyl diphosphate from 1-deoxy-D-xylulose 5-phosphate: step 5/6. Functionally, converts 2C-methyl-D-erythritol 2,4-cyclodiphosphate (ME-2,4cPP) into 1-hydroxy-2-methyl-2-(E)-butenyl 4-diphosphate. The sequence is that of 4-hydroxy-3-methylbut-2-en-1-yl diphosphate synthase (flavodoxin) from Thermus thermophilus (strain ATCC 27634 / DSM 579 / HB8).